The sequence spans 263 residues: Small ribosomal subunit protein eS4 (263 aa).

One can recognise an S4 RNA-binding domain in the interval 42–104 (LPLIVFLRNR…TGEHFRLVYD (63 aa)).

This sequence belongs to the eukaryotic ribosomal protein eS4 family.

The polypeptide is Small ribosomal subunit protein eS4 (RPS4Y1) (Gorilla gorilla gorilla (Western lowland gorilla)).